Here is a 147-residue protein sequence, read N- to C-terminus: Hemoglobin subunit epsilon-2 (147 aa).

The Globin domain occupies 3-147 (HFTTEENVAV…VANALTHKYH (145 aa)). Heme b-binding residues include Tyr-64 and His-93.

Belongs to the globin family. As to expression, red blood cells.

Functionally, hemoglobin epsilon chain is a beta-type chain found in early embryos. The sequence is that of Hemoglobin subunit epsilon-2 (HBE2) from Bos taurus (Bovine).